The sequence spans 799 residues: Protein translocase subunit SecA (799 aa).

ATP-binding positions include Gln-85, 103 to 107, and Asp-504; that span reads GEGKT.

This sequence belongs to the SecA family. In terms of assembly, monomer and homodimer. Part of the essential Sec protein translocation apparatus which comprises SecA, SecYEG and auxiliary proteins SecDF. Other proteins may also be involved.

The protein resides in the cell membrane. Its subcellular location is the cytoplasm. The enzyme catalyses ATP + H2O + cellular proteinSide 1 = ADP + phosphate + cellular proteinSide 2.. Part of the Sec protein translocase complex. Interacts with the SecYEG preprotein conducting channel. Has a central role in coupling the hydrolysis of ATP to the transfer of proteins into and across the cell membrane, serving as an ATP-driven molecular motor driving the stepwise translocation of polypeptide chains across the membrane. In Lactobacillus acidophilus (strain ATCC 700396 / NCK56 / N2 / NCFM), this protein is Protein translocase subunit SecA.